Reading from the N-terminus, the 255-residue chain is Putative F-box protein L126 (255 aa).

One can recognise an F-box domain in the interval 1-46 (MLPEEILFMVFSFLDVKELIACSHACSHACSQWRRICSDKLLWVQK).

The protein is Putative F-box protein L126 of Acanthamoeba polyphaga (Amoeba).